A 583-amino-acid chain; its full sequence is Putative amidase C869.01 (583 aa).

Residues 1–19 (MKLQLLFLTLAQLAKHGLA) form the signal peptide. Active-site charge relay system residues include lysine 141 and serine 222. The active-site Acyl-ester intermediate is serine 246.

The protein belongs to the amidase family.

The protein resides in the cytoplasm. The catalysed reaction is a monocarboxylic acid amide + H2O = a monocarboxylate + NH4(+). The protein is Putative amidase C869.01 of Schizosaccharomyces pombe (strain 972 / ATCC 24843) (Fission yeast).